The following is a 1770-amino-acid chain: Transposon Ty2-LR1 Gag-Pol polyprotein (1770 aa).

Composition is skewed to polar residues over residues 1–11 (MESQQLHQNPH), 19–39 (ASVT…SASN), and 49–60 (KVNSQQETTPGT). Disordered stretches follow at residues 1 to 86 (MESQ…GQYQ) and 359 to 453 (QHSE…LPDH). The interval 295–397 (ENNINVSDRL…SSKPRAAKAH (103 aa)) is RNA-binding. The span at 369–381 (TSPNTTNTKVTTR) shows a compositional bias: low complexity. Polar residues-rich tracts occupy residues 399-408 (IATSSKFSRV) and 415-435 (ESTV…GQQQ). Asp-457 acts as the For protease activity; shared with dimeric partner in catalysis. The integrase-type zinc finger-like stretch occupies residues 579–636 (NVNKSKSVNKYPYPLIHRMLGHANFRSIQKSLKKNAVTYLKESDIEWSNASTYQCPDC). The 176-residue stretch at 656 to 831 (ESYEPFQYLH…AGLDITTILP (176 aa)) folds into the Integrase catalytic domain. Mg(2+) is bound by residues Asp-667 and Asp-732. Disordered stretches follow at residues 1005–1038 (GGTI…MIDL), 1058–1135 (GTEE…KSSK), 1146–1165 (LPLP…VSKD), and 1170–1205 (HSRQ…TEIE). Composition is skewed to polar residues over residues 1009–1024 (ESDT…FTAR) and 1065–1082 (QRNS…STPS). Positions 1151–1165 (LTHKSPTDTSDVSKD) are enriched in basic and acidic residues. A Bipartite nuclear localization signal motif is present at residues 1193–1227 (KKRSLEDNETEIEVSRDTWNNKNMRSLEPPRSKKR). In terms of domain architecture, Reverse transcriptase Ty1/copia-type spans 1353-1491 (NDYYITQLDI…DILGLEIKYQ (139 aa)). 6 residues coordinate Mg(2+): Asp-1361, Asp-1442, Asp-1443, Asp-1625, Glu-1667, and Asp-1700. In terms of domain architecture, RNase H Ty1/copia-type spans 1625–1767 (DASYGNQPYY…IKTFKLLTNK (143 aa)).

As to quaternary structure, the capsid protein forms a homotrimer, from which the VLPs are assembled. The protease is a homodimer, whose active site consists of two apposed aspartic acid residues. Initially, virus-like particles (VLPs) are composed of the structural unprocessed proteins Gag and Gag-Pol, and also contain the host initiator methionine tRNA (tRNA(i)-Met) which serves as a primer for minus-strand DNA synthesis, and a dimer of genomic Ty RNA. Processing of the polyproteins occurs within the particle and proceeds by an ordered pathway, called maturation. First, the protease (PR) is released by autocatalytic cleavage of the Gag-Pol polyprotein, and this cleavage is a prerequisite for subsequent processing at the remaining sites to release the mature structural and catalytic proteins. Maturation takes place prior to the RT reaction and is required to produce transposition-competent VLPs.

It is found in the cytoplasm. Its subcellular location is the nucleus. The catalysed reaction is DNA(n) + a 2'-deoxyribonucleoside 5'-triphosphate = DNA(n+1) + diphosphate. It carries out the reaction Endonucleolytic cleavage to 5'-phosphomonoester.. Its function is as follows. Capsid protein (CA) is the structural component of the virus-like particle (VLP), forming the shell that encapsulates the retrotransposons dimeric RNA genome. The particles are assembled from trimer-clustered units and there are holes in the capsid shells that allow for the diffusion of macromolecules. CA also has nucleocapsid-like chaperone activity, promoting primer tRNA(i)-Met annealing to the multipartite primer-binding site (PBS), dimerization of Ty2 RNA and initiation of reverse transcription. The aspartyl protease (PR) mediates the proteolytic cleavages of the Gag and Gag-Pol polyproteins after assembly of the VLP. In terms of biological role, reverse transcriptase/ribonuclease H (RT) is a multifunctional enzyme that catalyzes the conversion of the retro-elements RNA genome into dsDNA within the VLP. The enzyme displays a DNA polymerase activity that can copy either DNA or RNA templates, and a ribonuclease H (RNase H) activity that cleaves the RNA strand of RNA-DNA heteroduplexes during plus-strand synthesis and hydrolyzes RNA primers. The conversion leads to a linear dsDNA copy of the retrotransposon that includes long terminal repeats (LTRs) at both ends. Functionally, integrase (IN) targets the VLP to the nucleus, where a subparticle preintegration complex (PIC) containing at least integrase and the newly synthesized dsDNA copy of the retrotransposon must transit the nuclear membrane. Once in the nucleus, integrase performs the integration of the dsDNA into the host genome. This Saccharomyces cerevisiae (strain ATCC 204508 / S288c) (Baker's yeast) protein is Transposon Ty2-LR1 Gag-Pol polyprotein (TY2B-LR1).